A 499-amino-acid polypeptide reads, in one-letter code: Rhamnogalacturonan I rhamnosyltransferase 1 (499 aa).

A helical; Signal-anchor for type II membrane protein transmembrane segment spans residues Trp31–Ala50. 3 N-linked (GlcNAc...) asparagine glycosylation sites follow: Asn88, Asn121, and Asn207. His261–Arg263 contributes to the substrate binding site. N-linked (GlcNAc...) asparagine glycans are attached at residues Asn375, Asn435, and Asn496.

Belongs to the glycosyltransferase GT106 family.

It is found in the golgi apparatus membrane. It carries out the reaction alpha-D-galacturonosyl-[(1-&gt;2)-alpha-L-rhamnosyl-(1-&gt;4)-alpha-D-galacturonosyl](n) + UDP-beta-L-rhamnose = [(1-&gt;2)-alpha-L-rhamnosyl-(1-&gt;4)-alpha-D-galacturonosyl](n+1) + UDP + H(+). Its pathway is glycan metabolism; pectin biosynthesis. In terms of biological role, glycosyltransferase involved in the formation of rhamnogalacturonan I (RG-I) oligosaccharides in the seed coat mucilage, which is a specialized cell wall with abundant RG-I. Transfers the rhamnose residue from UDP-beta-L-rhamnose to RG-I oligosaccharides. This chain is Rhamnogalacturonan I rhamnosyltransferase 1, found in Arabidopsis thaliana (Mouse-ear cress).